A 380-amino-acid chain; its full sequence is Chaperone protein DnaJ (380 aa).

Positions 5–70 (DYYEVLGVER…SKRAAYDQYG (66 aa)) constitute a J domain. A CR-type zinc finger spans residues 139-217 (GTTVNIRVPT…CHGEGRVEES (79 aa)). Residues Cys-152, Cys-155, Cys-169, Cys-172, Cys-191, Cys-194, Cys-205, and Cys-208 each coordinate Zn(2+). CXXCXGXG motif repeat units follow at residues 152–159 (CKPCDGSG), 169–176 (CPTCGGIG), 191–198 (CPRCHGHG), and 205–212 (CDSCHGEG).

The protein belongs to the DnaJ family. As to quaternary structure, homodimer. It depends on Zn(2+) as a cofactor.

It is found in the cytoplasm. In terms of biological role, participates actively in the response to hyperosmotic and heat shock by preventing the aggregation of stress-denatured proteins and by disaggregating proteins, also in an autonomous, DnaK-independent fashion. Unfolded proteins bind initially to DnaJ; upon interaction with the DnaJ-bound protein, DnaK hydrolyzes its bound ATP, resulting in the formation of a stable complex. GrpE releases ADP from DnaK; ATP binding to DnaK triggers the release of the substrate protein, thus completing the reaction cycle. Several rounds of ATP-dependent interactions between DnaJ, DnaK and GrpE are required for fully efficient folding. Also involved, together with DnaK and GrpE, in the DNA replication of plasmids through activation of initiation proteins. The sequence is that of Chaperone protein DnaJ from Pseudomonas syringae pv. tomato (strain ATCC BAA-871 / DC3000).